The following is a 74-amino-acid chain: UPF0435 protein GK0418 (74 aa).

Belongs to the UPF0435 family.

The sequence is that of UPF0435 protein GK0418 from Geobacillus kaustophilus (strain HTA426).